We begin with the raw amino-acid sequence, 86 residues long: Large ribosomal subunit protein bL31B (86 aa).

Belongs to the bacterial ribosomal protein bL31 family. Type B subfamily. Part of the 50S ribosomal subunit.

This Vibrio parahaemolyticus serotype O3:K6 (strain RIMD 2210633) protein is Large ribosomal subunit protein bL31B.